The primary structure comprises 343 residues: Aspartate carbamoyltransferase catalytic subunit (343 aa).

Carbamoyl phosphate-binding residues include Arg-91 and Thr-92. Lys-119 lines the L-aspartate pocket. Residues Arg-141, His-171, and Gln-174 each coordinate carbamoyl phosphate. Residues Arg-204 and Arg-259 each coordinate L-aspartate. Positions 300 and 301 each coordinate carbamoyl phosphate.

It belongs to the aspartate/ornithine carbamoyltransferase superfamily. ATCase family. Heterododecamer (2C3:3R2) of six catalytic PyrB chains organized as two trimers (C3), and six regulatory PyrI chains organized as three dimers (R2).

It carries out the reaction carbamoyl phosphate + L-aspartate = N-carbamoyl-L-aspartate + phosphate + H(+). It functions in the pathway pyrimidine metabolism; UMP biosynthesis via de novo pathway; (S)-dihydroorotate from bicarbonate: step 2/3. Catalyzes the condensation of carbamoyl phosphate and aspartate to form carbamoyl aspartate and inorganic phosphate, the committed step in the de novo pyrimidine nucleotide biosynthesis pathway. This chain is Aspartate carbamoyltransferase catalytic subunit, found in Burkholderia ambifaria (strain MC40-6).